The following is a 338-amino-acid chain: Galaxin (338 aa).

The N-terminal stretch at 1-23 (MKPSGAFLSLCVVLLSLATHCFS) is a signal peptide. Basic and acidic residues predominate over residues 30 to 47 (RRDAHSDTNALKSRDRRQ). Residues 30 to 50 (RRDAHSDTNALKSRDRRQAPA) form a disordered region.

As to expression, component of the acid-insoluble organic matrix of the aragonitic skeleton (at protein level). Initially, expressed in an aboral submarginal ring and then along calcifying septa.

Its subcellular location is the secreted. The sequence is that of Galaxin from Acropora millepora (Staghorn coral).